The sequence spans 66 residues: MNKDQIEGEWKNIKGIVKEKWGKLTDNDLTEINGQREQMLGKLQSLYGYSKEQAEKEWKDFQDKHR.

The protein belongs to the UPF0337 (CsbD) family.

The protein is UPF0337 protein pc0632 of Protochlamydia amoebophila (strain UWE25).